The following is a 120-amino-acid chain: UPF0231 protein KPN78578_01240 (120 aa).

The protein belongs to the UPF0231 family.

This is UPF0231 protein KPN78578_01240 from Klebsiella pneumoniae subsp. pneumoniae (strain ATCC 700721 / MGH 78578).